Reading from the N-terminus, the 308-residue chain is Ribosomal RNA small subunit methyltransferase H (308 aa).

S-adenosyl-L-methionine is bound by residues Ala32–His34, Asp51, Phe78, Asp99, and Gln106.

Belongs to the methyltransferase superfamily. RsmH family.

It localises to the cytoplasm. It catalyses the reaction cytidine(1402) in 16S rRNA + S-adenosyl-L-methionine = N(4)-methylcytidine(1402) in 16S rRNA + S-adenosyl-L-homocysteine + H(+). Its function is as follows. Specifically methylates the N4 position of cytidine in position 1402 (C1402) of 16S rRNA. This chain is Ribosomal RNA small subunit methyltransferase H, found in Mesoplasma florum (strain ATCC 33453 / NBRC 100688 / NCTC 11704 / L1) (Acholeplasma florum).